The sequence spans 337 residues: D-alanine--D-alanine ligase (337 aa).

The ATP-grasp domain maps to 124–330; that stretch reads KMWFSALGIP…FTEYLSLVIN (207 aa). 154-209 contributes to the ATP binding site; that stretch reads ALANWGSIFIKAASQGSSVGCYKVDDSSKVAQVLKDAFGYAPYVVVEKTIKARELE. Residues aspartate 284, glutamate 297, and asparagine 299 each contribute to the Mg(2+) site.

Belongs to the D-alanine--D-alanine ligase family. Mg(2+) is required as a cofactor. It depends on Mn(2+) as a cofactor.

It localises to the cytoplasm. It catalyses the reaction 2 D-alanine + ATP = D-alanyl-D-alanine + ADP + phosphate + H(+). It functions in the pathway cell wall biogenesis; peptidoglycan biosynthesis. Cell wall formation. The chain is D-alanine--D-alanine ligase from Shewanella putrefaciens (strain CN-32 / ATCC BAA-453).